The sequence spans 391 residues: Succinyl-diaminopimelate desuccinylase (391 aa).

H74 is a Zn(2+) binding site. D76 is a catalytic residue. D107 serves as a coordination point for Zn(2+). E141 acts as the Proton acceptor in catalysis. Zn(2+) is bound by residues E142, E170, and H360.

The protein belongs to the peptidase M20A family. DapE subfamily. In terms of assembly, homodimer. Zn(2+) serves as cofactor. The cofactor is Co(2+).

The catalysed reaction is N-succinyl-(2S,6S)-2,6-diaminopimelate + H2O = (2S,6S)-2,6-diaminopimelate + succinate. It participates in amino-acid biosynthesis; L-lysine biosynthesis via DAP pathway; LL-2,6-diaminopimelate from (S)-tetrahydrodipicolinate (succinylase route): step 3/3. In terms of biological role, catalyzes the hydrolysis of N-succinyl-L,L-diaminopimelic acid (SDAP), forming succinate and LL-2,6-diaminopimelate (DAP), an intermediate involved in the bacterial biosynthesis of lysine and meso-diaminopimelic acid, an essential component of bacterial cell walls. The chain is Succinyl-diaminopimelate desuccinylase from Variovorax paradoxus (strain S110).